The primary structure comprises 207 residues: Putative zinc finger protein 137 (207 aa).

The C2H2-type 1 zinc finger occupies 72–94 (CKCNDCHKVFSNATTIANHWRIH). The C2H2-type 2; degenerate zinc-finger motif lies at 100-122 (YKCNKCGKIFRHRSYLAVYQRTH). Residues 128–150 (YKYHDCGKVFSQASSYAKHRRIH) form a C2H2-type 3; degenerate zinc finger. C2H2-type zinc fingers lie at residues 156-178 (HKCD…QRIH) and 184-206 (YKCL…QKIH).

Belongs to the krueppel C2H2-type zinc-finger protein family.

It localises to the nucleus. Functionally, may be involved in transcriptional regulation. This is Putative zinc finger protein 137 (ZNF137P) from Homo sapiens (Human).